The following is a 345-amino-acid chain: Phosphate acyltransferase (345 aa).

It belongs to the PlsX family. As to quaternary structure, homodimer. Probably interacts with PlsY.

It localises to the cytoplasm. The enzyme catalyses a fatty acyl-[ACP] + phosphate = an acyl phosphate + holo-[ACP]. It functions in the pathway lipid metabolism; phospholipid metabolism. In terms of biological role, catalyzes the reversible formation of acyl-phosphate (acyl-PO(4)) from acyl-[acyl-carrier-protein] (acyl-ACP). This enzyme utilizes acyl-ACP as fatty acyl donor, but not acyl-CoA. The protein is Phosphate acyltransferase of Photorhabdus laumondii subsp. laumondii (strain DSM 15139 / CIP 105565 / TT01) (Photorhabdus luminescens subsp. laumondii).